We begin with the raw amino-acid sequence, 99 residues long: Integration host factor subunit beta (99 aa).

It belongs to the bacterial histone-like protein family. As to quaternary structure, heterodimer of an alpha and a beta chain.

This protein is one of the two subunits of integration host factor, a specific DNA-binding protein that functions in genetic recombination as well as in transcriptional and translational control. This chain is Integration host factor subunit beta, found in Laribacter hongkongensis (strain HLHK9).